Here is a 305-residue protein sequence, read N- to C-terminus: Carbonic anhydrase 5A, mitochondrial (305 aa).

The N-terminal 38 residues, 1 to 38 (MLGRNTWKTSAFSFLVEQMWAPLWSRSMRPGRWCSQRS), are a transit peptide targeting the mitochondrion. One can recognise an Alpha-carbonic anhydrase domain in the interval 39–296 (CAWQTSNNTL…LMNRKVWASF (258 aa)). 3 residues coordinate Zn(2+): histidine 130, histidine 132, and histidine 155.

The protein belongs to the alpha-carbonic anhydrase family. The cofactor is Zn(2+).

The protein resides in the mitochondrion. The catalysed reaction is hydrogencarbonate + H(+) = CO2 + H2O. With respect to regulation, activated by L- and D-histidine. Activated by L- and D-phenylalanine. Activated by L-adrenaline. Inhibited by coumarins, sulfonamide derivatives such as acetazolamide and Foscarnet (phosphonoformate trisodium salt). Activated by histamine. In terms of biological role, mitochondrial carbonic anhydrase that catalyzes the reversible conversion of carbon dioxide to bicarbonate/HCO3. Mitochondria are impermeable to HCO3, and thus this intramitochondrial carbonic anhydrase is pivotal in providing HCO3 for multiple mitochondrial enzymes that catalyze the formation of essential metabolites of intermediary metabolism in the urea and Krebs cycles. This Homo sapiens (Human) protein is Carbonic anhydrase 5A, mitochondrial.